The primary structure comprises 395 residues: Flagellin D (395 aa).

Belongs to the bacterial flagellin family.

It is found in the secreted. The protein localises to the bacterial flagellum. Functionally, flagellin is the subunit protein which polymerizes to form the filaments of bacterial flagella. This Rhizobium meliloti (Ensifer meliloti) protein is Flagellin D (flaD).